The following is a 396-amino-acid chain: Phosphoglycerate kinase (396 aa).

Residues Asp-21 to Asn-23, Arg-37, His-60 to Arg-63, Arg-121, and Arg-154 contribute to the substrate site. ATP is bound by residues Lys-205, Gly-296, Glu-327, and Gly-353–Ser-356.

It belongs to the phosphoglycerate kinase family. As to quaternary structure, monomer.

The protein resides in the cytoplasm. The enzyme catalyses (2R)-3-phosphoglycerate + ATP = (2R)-3-phospho-glyceroyl phosphate + ADP. It functions in the pathway carbohydrate degradation; glycolysis; pyruvate from D-glyceraldehyde 3-phosphate: step 2/5. The polypeptide is Phosphoglycerate kinase (Anaeromyxobacter dehalogenans (strain 2CP-C)).